Reading from the N-terminus, the 208-residue chain is Uracil phosphoribosyltransferase (208 aa).

Residues R78, R103, and D130–S138 contribute to the 5-phospho-alpha-D-ribose 1-diphosphate site. Residues I193 and G198–A200 each bind uracil. Residue D199 participates in 5-phospho-alpha-D-ribose 1-diphosphate binding.

It belongs to the UPRTase family. Requires Mg(2+) as cofactor.

It carries out the reaction UMP + diphosphate = 5-phospho-alpha-D-ribose 1-diphosphate + uracil. It participates in pyrimidine metabolism; UMP biosynthesis via salvage pathway; UMP from uracil: step 1/1. Allosterically activated by GTP. Catalyzes the conversion of uracil and 5-phospho-alpha-D-ribose 1-diphosphate (PRPP) to UMP and diphosphate. The sequence is that of Uracil phosphoribosyltransferase from Thermosipho africanus (strain TCF52B).